We begin with the raw amino-acid sequence, 128 residues long: Large ribosomal subunit protein eL22 (128 aa).

Belongs to the eukaryotic ribosomal protein eL22 family. In terms of assembly, component of the large ribosomal subunit.

It is found in the cytoplasm. In terms of biological role, component of the large ribosomal subunit. The ribosome is a large ribonucleoprotein complex responsible for the synthesis of proteins in the cell. This chain is Large ribosomal subunit protein eL22 (rpl22), found in Xenopus tropicalis (Western clawed frog).